Here is a 1158-residue protein sequence, read N- to C-terminus: Teashirt homolog 1 (1158 aa).

3 disordered regions span residues 70–126, 170–228, and 310–341; these read DDGR…DMDT, INST…ANNG, and TGHY…EMEG. Positions 76-88 are enriched in polar residues; that stretch reads LSYQNSPLSNGTN. Low complexity-rich tracts occupy residues 186–205 and 213–228; these read SHAS…ASAS and SSNS…ANNG. 2 C2H2-type zinc fingers span residues 288–312 and 349–373; these read FRCK…ETGH and LKCM…KTKH. A compositionally biased stretch (basic and acidic residues) spans 310-326; the sequence is TGHYRDDNKDKEEDRGK. The disordered stretch occupies residues 405–425; sequence PCSPDSISSTPGIPLAETAPT. Residues 461-485 form a C2H2-type 3 zinc finger; the sequence is LKCMECGSSHDTLQQLTAHMMVTGH. Disordered stretches follow at residues 516–573, 656–681, and 693–748; these read PPTT…VEKS, LKSL…NHKS, and VTGK…VDKD. Positions 555-573 are enriched in basic and acidic residues; sequence EEKKIKQEKEDPSERVEKS. The span at 656–671 shows a compositional bias: low complexity; sequence LKSLTSDSSTLIHSPS. Composition is skewed to basic and acidic residues over residues 693-716 and 724-748; these read VTGK…KHLT and LKER…VDKD. Positions 963-1033 form a DNA-binding region, homeobox; that stretch reads RKGRQSNWNP…NVKYQLRRTG (71 aa). 2 C2H2-type zinc fingers span residues 1048–1070 and 1115–1138; these read FLCS…LESH and FQCK…SKTH.

This sequence belongs to the teashirt C2H2-type zinc-finger protein family.

The protein resides in the nucleus. In terms of biological role, probable transcriptional regulator involved in developmental processes. May act as a transcriptional repressor (Potential). This Danio rerio (Zebrafish) protein is Teashirt homolog 1 (tshz1).